Consider the following 72-residue polypeptide: Penaeidin-2d (72 aa).

The first 21 residues, 1–21 (MRLVVCLVFLASFALVCQGGA), serve as a signal peptide directing secretion. A Pyrrolidone carboxylic acid modification is found at glutamine 22. Cystine bridges form between cysteine 45–cysteine 59, cysteine 48–cysteine 66, and cysteine 60–cysteine 67. Lysine amide is present on lysine 71.

This sequence belongs to the penaeidin family.

Its subcellular location is the cytoplasmic granule. In terms of biological role, antibacterial and antifungal activity. Presents chitin-binding activity. This Penaeus setiferus (Atlantic white shrimp) protein is Penaeidin-2d.